The sequence spans 158 residues: CD-NTase/cGAS isopeptidase (158 aa).

Glu-38 (proton donor/acceptor) is an active-site residue. The Zn(2+) site is built by His-100, His-102, and Asp-113.

Belongs to the peptidase M67B family. Cap3 isopeptidase subfamily.

Its function is as follows. Metalloprotease priming reversal component of a CBASS antivirus system. CBASS (cyclic oligonucleotide-based antiphage signaling system) provides immunity against bacteriophages. The CD-NTase protein synthesizes cyclic nucleotides in response to infection; these serve as specific second messenger signals. The signals activate a diverse range of effectors, leading to bacterial cell death and thus abortive phage infection. A type II-A(GA) CBASS system. Reverses the primed state of CdnA, the CD-NTase. In terms of biological role, the capV-cdnA-cap2-cap3 operon provides about 10(4)-fold protection in strain BWHPSA011 against infection by phage PaMx41. In P.aeruginosa strain PAO1 it confers protection against phages PaMx41 and JBD18 but not JBD67 (JBD18 and JBD67 do not replicate in BWHPSA011 / Pa011). When acb2 in JBD67 is deleted this CBASS operon then protects against JDB67 also. This CBASS system limits prophage induction of lysogenized JBD67 as well as viral lytic replication. This chain is CD-NTase/cGAS isopeptidase, found in Pseudomonas aeruginosa (strain BWHPSA011 / Pa011).